Here is a 188-residue protein sequence, read N- to C-terminus: MTIYYMIVFMLLMVEIVSFVILSLPLPLKVRRAILNAISNSPFAGRVKHVLKITIICILILFADSVRRVVRVTKEYDLAIAAPSTTESARSGYKASQFYAQRNLYLCGSALFLSLVVNRYYLALEAMIAAQDKMQALQTQVEASTNNAKAVEELETLRTKLETRDKEYETLAEKYAAVTKTVEKKKDI.

A run of 3 helical transmembrane segments spans residues 6–26 (MIVFMLLMVEIVSFVILSLPL), 43–63 (FAGRVKHVLKITIICILILFA), and 110–130 (ALFLSLVVNRYYLALEAMIAA).

It is found in the membrane. This is an uncharacterized protein from Schizosaccharomyces pombe (strain 972 / ATCC 24843) (Fission yeast).